Consider the following 572-residue polypeptide: Transcription factor E3 (572 aa).

The residue at position 47 (Ser47) is a Phosphoserine; by MTOR. The segment covering 87-125 has biased composition (low complexity); that stretch reads TTPATLSASSSAGGSRTPAMSSSSSRVLLRQQLMRAQAQ. The tract at residues 87-152 is disordered; it reads TTPATLSASS…SPAPASPAIS (66 aa). The segment covering 126–135 has biased composition (basic and acidic residues); the sequence is EQERRERREQ. An Asymmetric dimethylarginine modification is found at Arg187. The disordered stretch occupies residues 210-248; that stretch reads LASQALTPPPGPSSAQPLPAPETAHATGPTGSAPNSPMA. The strong transcription activation domain stretch occupies residues 259 to 270; the sequence is EIDDVIDEIISL. Phosphoserine; by MTOR is present on Ser320. Lys338 participates in a covalent cross-link: Glycyl lysine isopeptide (Lys-Gly) (interchain with G-Cter in SUMO2). Positions 345 to 398 constitute a bHLH domain; it reads QKKDNHNLIERRRRFNINDRIKELGTLIPKSNDPEMRWNKGTILKASVDYIRKL. The Nuclear localization signal motif lies at 355–358; it reads RRRR. Residues 408–429 form a leucine-zipper region; the sequence is LESRQRSLEQANRSLQLRIQEL. 2 disordered regions span residues 439 to 495 and 530 to 572; these read PVPP…APPS and VGGL…EEES. The span at 446–457 shows a compositional bias: low complexity; sequence LLSLTTSSVSDS. Phosphoserine occurs at positions 539, 545, 551, 553, 557, and 565. Residues 543–572 show a composition bias toward low complexity; sequence AASDPLLSSVSPAVSKASSRRSSFSMEEES.

The protein belongs to the MiT/TFE family. As to quaternary structure, homodimer and heterodimer; with TFEB or MITF. Interacts with RRAGC/RagC GDP-bound and RRAGD/RagD GDP-bound; promoting its recruitment to lysosomal membrane in the presence of nutrients. Interacts with TSC22D1; the interaction is enhanced in the presence of TGF-beta. In terms of processing, sumoylated; does not affect dimerization with MITF. Phosphorylation ar Ser-47 and Ser-320 by MTOR via non-canonical mTORC1 pathway regulates its stability and subcellular location, respectively. When nutrients are present, phosphorylation by MTOR at Ser-47 promotes ubiquitination by the SCF(BTRC) complex, followed by degradation. When nutrients are present, phosphorylation by MTOR at Ser-320 also promotes association with 14-3-3/YWHA adapters and retention in the cytosol. Phosphorylation at Ser-47 plays a more critical role than phosphorylation at Ser-320 for TFE3 inactivation. Inhibition of mTORC1, starvation and lysosomal disruption, promotes dephosphorylation and transcription factor activity. Post-translationally, ubiquitinated by the SCF(BTRC) and SCF(FBXW11) complexes following phosphorylation at Ser-47 by MTOR, leading to its degradation by the proteasome. In terms of tissue distribution, widely expressed.

The protein resides in the cytoplasm. Its subcellular location is the cytosol. It localises to the nucleus. The protein localises to the lysosome membrane. In terms of biological role, transcription factor that acts as a master regulator of lysosomal biogenesis and immune response. Specifically recognizes and binds E-box sequences (5'-CANNTG-3'); efficient DNA-binding requires dimerization with itself or with another MiT/TFE family member such as TFEB or MITF. Involved in the cellular response to amino acid availability by acting downstream of MTOR: in the presence of nutrients, TFE3 phosphorylation by MTOR promotes its inactivation. Upon starvation or lysosomal stress, inhibition of MTOR induces TFE3 dephosphorylation, resulting in transcription factor activity. Specifically recognizes and binds the CLEAR-box sequence (5'-GTCACGTGAC-3') present in the regulatory region of many lysosomal genes, leading to activate their expression, thereby playing a central role in expression of lysosomal genes. Maintains the pluripotent state of embryonic stem cells by promoting the expression of genes such as ESRRB; mTOR-dependent TFE3 cytosolic retention and inactivation promotes exit from pluripotency. Required to maintain the naive pluripotent state of hematopoietic stem cell; mTOR-dependent cytoplasmic retention of TFE3 promotes the exit of hematopoietic stem cell from pluripotency. TFE3 activity is also involved in the inhibition of neuronal progenitor differentiation. Acts as a positive regulator of browning of adipose tissue by promoting expression of target genes; mTOR-dependent phosphorylation promotes cytoplasmic retention of TFE3 and inhibits browning of adipose tissue. In association with TFEB, activates the expression of CD40L in T-cells, thereby playing a role in T-cell-dependent antibody responses in activated CD4(+) T-cells and thymus-dependent humoral immunity. Specifically recognizes the MUE3 box, a subset of E-boxes, present in the immunoglobulin enhancer. It also binds very well to a USF/MLTF site. Promotes TGF-beta-induced transcription of COL1A2; via its interaction with TSC22D1 at E-boxes in the gene proximal promoter. May regulate lysosomal positioning in response to nutrient deprivation by promoting the expression of PIP4P1. This Mus musculus (Mouse) protein is Transcription factor E3.